The following is a 422-amino-acid chain: Dihydrolipoyllysine-residue succinyltransferase component of 2-oxoglutarate dehydrogenase complex (422 aa).

A Lipoyl-binding domain is found at 1–76 (MPEVKVPELA…EVGQAIAIIG (76 aa)). K42 is subject to N6-lipoyllysine. Residues 77-184 (EGSGNASKEN…APAKEEKKYN (108 aa)) form a disordered region. Polar residues-rich tracts occupy residues 80–94 (GNAS…TPQQ) and 116–130 (NQAN…NATP). A Peripheral subunit-binding (PSBD) domain is found at 127 to 163 (NATPSARRYARENGVNLAEVSPKTNDVVRKEDIDKKQ). A compositionally biased stretch (basic and acidic residues) spans 152–163 (DVVRKEDIDKKQ). The span at 164–176 (QAPASTQTTQQAP) shows a compositional bias: low complexity. Active-site residues include H393 and D397.

It belongs to the 2-oxoacid dehydrogenase family. Forms a 24-polypeptide structural core with octahedral symmetry. Part of the 2-oxoglutarate dehydrogenase (OGDH) complex composed of E1 (2-oxoglutarate dehydrogenase), E2 (dihydrolipoamide succinyltransferase) and E3 (dihydrolipoamide dehydrogenase); the complex contains multiple copies of the three enzymatic components (E1, E2 and E3). It depends on (R)-lipoate as a cofactor.

The enzyme catalyses N(6)-[(R)-dihydrolipoyl]-L-lysyl-[protein] + succinyl-CoA = N(6)-[(R)-S(8)-succinyldihydrolipoyl]-L-lysyl-[protein] + CoA. Its pathway is amino-acid degradation; L-lysine degradation via saccharopine pathway; glutaryl-CoA from L-lysine: step 6/6. Functionally, E2 component of the 2-oxoglutarate dehydrogenase (OGDH) complex which catalyzes the second step in the conversion of 2-oxoglutarate to succinyl-CoA and CO(2). This Staphylococcus aureus (strain Mu50 / ATCC 700699) protein is Dihydrolipoyllysine-residue succinyltransferase component of 2-oxoglutarate dehydrogenase complex (odhB).